The chain runs to 424 residues: Adenylosuccinate synthetase (424 aa).

Residues 11–17 (GDEGKGK) and 39–41 (GHT) each bind GTP. The Proton acceptor role is filled by aspartate 12. Mg(2+) contacts are provided by aspartate 12 and glycine 39. IMP contacts are provided by residues 12–15 (DEGK), 37–40 (NAGH), threonine 127, arginine 141, glutamine 223, threonine 238, and arginine 302. Histidine 40 (proton donor) is an active-site residue. Substrate is bound at residue 298-304 (TTTGRGR). GTP contacts are provided by residues arginine 304, 330–332 (KLD), and 412–414 (SVG).

The protein belongs to the adenylosuccinate synthetase family. In terms of assembly, homodimer. The cofactor is Mg(2+).

Its subcellular location is the cytoplasm. It catalyses the reaction IMP + L-aspartate + GTP = N(6)-(1,2-dicarboxyethyl)-AMP + GDP + phosphate + 2 H(+). The protein operates within purine metabolism; AMP biosynthesis via de novo pathway; AMP from IMP: step 1/2. Its function is as follows. Plays an important role in the de novo pathway of purine nucleotide biosynthesis. Catalyzes the first committed step in the biosynthesis of AMP from IMP. This is Adenylosuccinate synthetase from Methanosarcina barkeri (strain Fusaro / DSM 804).